We begin with the raw amino-acid sequence, 120 residues long: Ragulator complex protein LAMTOR4 homolog (120 aa).

Positions 93–120 (QNGVTTTTSSSSSNSVYNDASDSGAVLA) are disordered. A compositionally biased stretch (low complexity) spans 97-107 (TTTTSSSSSNS).

The protein belongs to the LAMTOR4 family. Part of the Ragulator complex composed of Lamtor3, Lamtor2, CG14184, CG14812, and Lamtor4.

It localises to the lysosome. Functionally, regulator of the TOR pathway, a signaling cascade that promotes cell growth in response to growth factors, energy levels, and amino acids. As part of the Ragulator complex, may activate the TOR signaling cascade in response to amino acids. This Drosophila melanogaster (Fruit fly) protein is Ragulator complex protein LAMTOR4 homolog.